Here is a 316-residue protein sequence, read N- to C-terminus: Leucine-rich repeat-containing protein 73 (316 aa).

LRR repeat units lie at residues 57–78 (SLAQ…KQLA), 86–106 (SIQS…ALLN), 114–137 (ALVA…CGLL), 145–166 (GLKE…SRLA), 174–187 (QVRV…PLGD), 202–223 (TLEV…TLLD), and 231–250 (ALRS…QQQI). Residues 257-296 (GEEEEEMAGGAADTQEWGRGREPAAHQRGGSSWKCPSDPN) form a disordered region. The span at 272–281 (EWGRGREPAA) shows a compositional bias: basic and acidic residues.

This Rattus norvegicus (Rat) protein is Leucine-rich repeat-containing protein 73 (Lrrc73).